A 145-amino-acid polypeptide reads, in one-letter code: Flagellar assembly factor FliW (145 aa).

This sequence belongs to the FliW family. As to quaternary structure, interacts with translational regulator CsrA and flagellin(s).

It localises to the cytoplasm. Acts as an anti-CsrA protein, binds CsrA and prevents it from repressing translation of its target genes, one of which is flagellin. Binds to flagellin and participates in the assembly of the flagellum. This Exiguobacterium sp. (strain ATCC BAA-1283 / AT1b) protein is Flagellar assembly factor FliW.